Reading from the N-terminus, the 354-residue chain is Homeobox-leucine zipper protein HOX27 (354 aa).

Residues 98–175 (SVAAGAPGME…DDEGASARKK (78 aa)) form a disordered region. The segment covering 148-157 (QGGGGGGGGE) has biased composition (gly residues). The homeobox DNA-binding region spans 171-230 (SARKKLRLSKEQSAFLEESFKEHSTLNPKQKVALAKQLNLRPRQVEVWFQNRRARTKLKQ). The leucine-zipper stretch occupies residues 229 to 273 (KQTEVDCEYLKRCCETLTEENRRLHKELAELRALKTARPFYMHLP). The tract at residues 294–323 (STSAPAAATSPAAAPTAAARTAVASPEPHR) is disordered.

The protein belongs to the HD-ZIP homeobox family. Class II subfamily. Expressed in seedlings, roots, stems, leaf sheaths and blades and panicles.

The protein resides in the nucleus. Functionally, probable transcription factor. The polypeptide is Homeobox-leucine zipper protein HOX27 (HOX27) (Oryza sativa subsp. indica (Rice)).